The following is a 102-amino-acid chain: Small ribosomal subunit protein uS10 (102 aa).

The disordered stretch occupies residues 37-61; the sequence is PIPLPTKSLKITTRKSTDGEGSSSF.

Belongs to the universal ribosomal protein uS10 family. As to quaternary structure, part of the 30S ribosomal subunit.

Involved in the binding of tRNA to the ribosomes. The chain is Small ribosomal subunit protein uS10 from Methanococcus vannielii (strain ATCC 35089 / DSM 1224 / JCM 13029 / OCM 148 / SB).